The following is a 330-amino-acid chain: DNA-directed RNA polymerase subunit alpha (330 aa).

The alpha N-terminal domain (alpha-NTD) stretch occupies residues 1–236; sequence MQGSVTEFLK…EQLDAFVDLR (236 aa). The segment at 250–330 is alpha C-terminal domain (alpha-CTD); that stretch reads FDPILLRPVD…NWPPASIAED (81 aa).

Belongs to the RNA polymerase alpha chain family. In terms of assembly, homodimer. The RNAP catalytic core consists of 2 alpha, 1 beta, 1 beta' and 1 omega subunit. When a sigma factor is associated with the core the holoenzyme is formed, which can initiate transcription.

The catalysed reaction is RNA(n) + a ribonucleoside 5'-triphosphate = RNA(n+1) + diphosphate. In terms of biological role, DNA-dependent RNA polymerase catalyzes the transcription of DNA into RNA using the four ribonucleoside triphosphates as substrates. This Vibrio campbellii (strain ATCC BAA-1116) protein is DNA-directed RNA polymerase subunit alpha.